We begin with the raw amino-acid sequence, 145 residues long: MITLIGKDLAKKGNEFIFYGSVDECENCRFKASCVDSLEKNRKYKIIDVRDNEQKCPVHAENTVIPVEVDRSNITLLSSSKSIFEGSTFSYESADCDEECEYYDYCFPEGLVDGDKCIVLKNHGKHKGECKKGYKLNKLTLGFVI.

The protein belongs to the UPF0179 family.

The sequence is that of UPF0179 protein Msm_0285 from Methanobrevibacter smithii (strain ATCC 35061 / DSM 861 / OCM 144 / PS).